The primary structure comprises 548 residues: Chaperonin GroEL (548 aa).

Residues 30 to 33 (TLGP), K51, 87 to 91 (DGTTT), G415, and D494 each bind ATP.

The protein belongs to the chaperonin (HSP60) family. Forms a cylinder of 14 subunits composed of two heptameric rings stacked back-to-back. Interacts with the co-chaperonin GroES.

It is found in the cytoplasm. The enzyme catalyses ATP + H2O + a folded polypeptide = ADP + phosphate + an unfolded polypeptide.. In terms of biological role, together with its co-chaperonin GroES, plays an essential role in assisting protein folding. The GroEL-GroES system forms a nano-cage that allows encapsulation of the non-native substrate proteins and provides a physical environment optimized to promote and accelerate protein folding. In Oleispira antarctica, this protein is Chaperonin GroEL.